The primary structure comprises 195 residues: Imidazoleglycerol-phosphate dehydratase (195 aa).

This sequence belongs to the imidazoleglycerol-phosphate dehydratase family.

It localises to the cytoplasm. It carries out the reaction D-erythro-1-(imidazol-4-yl)glycerol 3-phosphate = 3-(imidazol-4-yl)-2-oxopropyl phosphate + H2O. The protein operates within amino-acid biosynthesis; L-histidine biosynthesis; L-histidine from 5-phospho-alpha-D-ribose 1-diphosphate: step 6/9. The polypeptide is Imidazoleglycerol-phosphate dehydratase (Dechloromonas aromatica (strain RCB)).